Reading from the N-terminus, the 396-residue chain is Argininosuccinate synthase (396 aa).

Position 9–17 (9–17 (AYSGGLDTS)) interacts with ATP. Tyr-85 serves as a coordination point for L-citrulline. Gly-115 is a binding site for ATP. L-aspartate is bound by residues Thr-117, Asn-121, and Asp-122. Asn-121 serves as a coordination point for L-citrulline. Arg-125, Ser-173, Glu-258, and Tyr-270 together coordinate L-citrulline.

Belongs to the argininosuccinate synthase family. Type 1 subfamily. As to quaternary structure, homotetramer.

The protein localises to the cytoplasm. It catalyses the reaction L-citrulline + L-aspartate + ATP = 2-(N(omega)-L-arginino)succinate + AMP + diphosphate + H(+). Its pathway is amino-acid biosynthesis; L-arginine biosynthesis; L-arginine from L-ornithine and carbamoyl phosphate: step 2/3. The chain is Argininosuccinate synthase from Streptococcus agalactiae serotype V (strain ATCC BAA-611 / 2603 V/R).